The following is a 347-amino-acid chain: Ribosomal RNA large subunit methyltransferase M (347 aa).

S-adenosyl-L-methionine-binding positions include serine 184, 217–220, aspartate 236, aspartate 256, and aspartate 272; that span reads APGG. Lysine 301 serves as the catalytic Proton acceptor.

It belongs to the class I-like SAM-binding methyltransferase superfamily. RNA methyltransferase RlmE family. RlmM subfamily. As to quaternary structure, monomer.

The protein localises to the cytoplasm. The catalysed reaction is cytidine(2498) in 23S rRNA + S-adenosyl-L-methionine = 2'-O-methylcytidine(2498) in 23S rRNA + S-adenosyl-L-homocysteine + H(+). Functionally, catalyzes the 2'-O-methylation at nucleotide C2498 in 23S rRNA. The protein is Ribosomal RNA large subunit methyltransferase M of Xanthomonas euvesicatoria pv. vesicatoria (strain 85-10) (Xanthomonas campestris pv. vesicatoria).